The primary structure comprises 96 residues: Small ribosomal subunit protein bS6 (96 aa).

Belongs to the bacterial ribosomal protein bS6 family.

Binds together with bS18 to 16S ribosomal RNA. This Cutibacterium acnes (strain DSM 16379 / KPA171202) (Propionibacterium acnes) protein is Small ribosomal subunit protein bS6.